The primary structure comprises 334 residues: Holliday junction branch migration complex subunit RuvB (334 aa).

Residues 4–186 (ADRLIAPENP…FGITQRLEYY (183 aa)) form a large ATPase domain (RuvB-L) region. ATP contacts are provided by residues isoleucine 25, arginine 26, glycine 67, lysine 70, threonine 71, threonine 72, 133–135 (EDY), arginine 176, tyrosine 186, and arginine 223. Threonine 71 is a binding site for Mg(2+). A small ATPAse domain (RuvB-S) region spans residues 187-257 (KVKDLQDIVQ…TADKALNMLD (71 aa)). The interval 260–334 (AEGFDYMDRK…RAYLHFGIEK (75 aa)) is head domain (RuvB-H). DNA contacts are provided by arginine 315 and arginine 320.

The protein belongs to the RuvB family. In terms of assembly, homohexamer. Forms an RuvA(8)-RuvB(12)-Holliday junction (HJ) complex. HJ DNA is sandwiched between 2 RuvA tetramers; dsDNA enters through RuvA and exits via RuvB. An RuvB hexamer assembles on each DNA strand where it exits the tetramer. Each RuvB hexamer is contacted by two RuvA subunits (via domain III) on 2 adjacent RuvB subunits; this complex drives branch migration. In the full resolvosome a probable DNA-RuvA(4)-RuvB(12)-RuvC(2) complex forms which resolves the HJ.

The protein resides in the cytoplasm. The enzyme catalyses ATP + H2O = ADP + phosphate + H(+). In terms of biological role, the RuvA-RuvB-RuvC complex processes Holliday junction (HJ) DNA during genetic recombination and DNA repair, while the RuvA-RuvB complex plays an important role in the rescue of blocked DNA replication forks via replication fork reversal (RFR). RuvA specifically binds to HJ cruciform DNA, conferring on it an open structure. The RuvB hexamer acts as an ATP-dependent pump, pulling dsDNA into and through the RuvAB complex. RuvB forms 2 homohexamers on either side of HJ DNA bound by 1 or 2 RuvA tetramers; 4 subunits per hexamer contact DNA at a time. Coordinated motions by a converter formed by DNA-disengaged RuvB subunits stimulates ATP hydrolysis and nucleotide exchange. Immobilization of the converter enables RuvB to convert the ATP-contained energy into a lever motion, pulling 2 nucleotides of DNA out of the RuvA tetramer per ATP hydrolyzed, thus driving DNA branch migration. The RuvB motors rotate together with the DNA substrate, which together with the progressing nucleotide cycle form the mechanistic basis for DNA recombination by continuous HJ branch migration. Branch migration allows RuvC to scan DNA until it finds its consensus sequence, where it cleaves and resolves cruciform DNA. The chain is Holliday junction branch migration complex subunit RuvB from Vibrio campbellii (strain ATCC BAA-1116).